The following is a 212-amino-acid chain: Ras-related protein Rab-2A (212 aa).

Position 2 is an N-acetylalanine (Ala2). The required for interaction with PRKCI stretch occupies residues 2–19 (AYAYLFKYIIIGDTGVGK). Residues Gly16, Val17, Gly18, Lys19, Ser20, Cys21, and Thr38 each coordinate GTP. Ser20 lines the Mg(2+) pocket. Positions 37–42 (LTMGVE) match the Switch 1 motif. Mg(2+)-binding residues include Thr38 and Asp61. The short motif at 63-72 (AGQESFRSIT) is the Switch 2 element. Gly64, Asn119, Lys120, Asp122, Ala150, and Lys151 together coordinate GTP. The segment at 190–212 (QHAATNASHGGNQGGQQAGGGCC) is disordered. Over residues 200-212 (GNQGGQQAGGGCC) the composition is skewed to gly residues. S-geranylgeranyl cysteine attachment occurs at residues Cys211 and Cys212.

The protein belongs to the small GTPase superfamily. Rab family. As to quaternary structure, interacts with PRKCI. Interacts with TRIP11. Interacts (in GTP-bound form) with GARIN1B. Interacts (GTP-bound) with HOPS complex component VPS39; interaction contributes to obtaining a functional HOPS complex that promotes autophagosome-lysosome membrane fusion driven by STX17-SNAP29-VAMP8. May interact with VPS41. Mg(2+) is required as a cofactor. Prenylated. Prenylation is required for association with cellular membranes.

Its subcellular location is the endoplasmic reticulum-Golgi intermediate compartment membrane. It localises to the melanosome. It is found in the endoplasmic reticulum membrane. The protein resides in the golgi apparatus membrane. The protein localises to the cytoplasmic vesicle. Its subcellular location is the secretory vesicle. It localises to the acrosome. It is found in the autophagosome membrane. It catalyses the reaction GTP + H2O = GDP + phosphate + H(+). Regulated by guanine nucleotide exchange factors (GEFs) which promote the exchange of bound GDP for free GTP, GTPase activating proteins (GAPs) which increase the GTP hydrolysis activity, and GDP dissociation inhibitors (GDIs) which inhibit the dissociation of the nucleotide from the GTPase. The small GTPases Rab are key regulators of intracellular membrane trafficking, from the formation of transport vesicles to their fusion with membranes. Rabs cycle between active GTP-bound and inactive GDP-bound states. In their active state, drive transport of vesicular carriers from donor organelles to acceptor organelles to regulate the membrane traffic that maintains organelle identity and morphology. RAB2A regulates autophagy by promoting autophagosome-lysosome fusion via recruitment of the HOPS endosomal tethering complex; this process involves autophagosomal RAB2A and lysosomal RAB39A recruitment of HOPS subcomplexes VPS39-VPS11 and VPS41-VPS16-VPS18-VPS33A, respectively, which assemble into a functional complex to mediate membrane tethering and SNAREs-driven membrane fusion. Required for protein transport from the endoplasmic reticulum to the Golgi complex. Regulates the compacted morphology of the Golgi. Together with RAB2B, redundantly required for efficient autophagic flux. This chain is Ras-related protein Rab-2A (Rab2a), found in Rattus norvegicus (Rat).